Consider the following 81-residue polypeptide: Sulfur carrier protein TusA (81 aa).

Cys-19 acts as the Cysteine persulfide intermediate in catalysis.

The protein belongs to the sulfur carrier protein TusA family.

It localises to the cytoplasm. Functionally, sulfur carrier protein which probably makes part of a sulfur-relay system. The protein is Sulfur carrier protein TusA of Shewanella sp. (strain MR-4).